A 148-amino-acid chain; its full sequence is Transcriptional regulator MraZ (148 aa).

SpoVT-AbrB domains follow at residues 5–51 and 80–123; these read STQL…PQPV and ASDV…DMAK.

Belongs to the MraZ family. In terms of assembly, forms oligomers.

It localises to the cytoplasm. The protein localises to the nucleoid. The chain is Transcriptional regulator MraZ from Nitrosomonas europaea (strain ATCC 19718 / CIP 103999 / KCTC 2705 / NBRC 14298).